Reading from the N-terminus, the 303-residue chain is D-alanine--D-alanine ligase (303 aa).

Residues 104–300 (KLLWNAVGLP…FEKLVERVLE (197 aa)) enclose the ATP-grasp domain. Position 132–187 (132–187 (IAKLSLPVFVKPSSEGSSVGVFKVKTKEELLPAITAALEFDTIVLVEEFLTGAEYS)) interacts with ATP. 3 residues coordinate Mg(2+): D254, E267, and N269.

It belongs to the D-alanine--D-alanine ligase family. Mg(2+) is required as a cofactor. Mn(2+) serves as cofactor.

The protein localises to the cytoplasm. The enzyme catalyses 2 D-alanine + ATP = D-alanyl-D-alanine + ADP + phosphate + H(+). It functions in the pathway cell wall biogenesis; peptidoglycan biosynthesis. Functionally, cell wall formation. The polypeptide is D-alanine--D-alanine ligase (Haemophilus ducreyi (strain 35000HP / ATCC 700724)).